The sequence spans 508 residues: Photosystem II CP47 reaction center protein (508 aa).

6 helical membrane passes run 21-36, 101-115, 140-156, 203-218, 237-252, and 457-472; these read AVHLMHTALVSGWAGS, ITLSGLLFLSAIWHW, GIHLFLSGVLCFGFGAF, IAAGILGILAGLFHLS, VLSSSIAAVFFAAFVV, and TFALIFFFGHIWHGAR.

Belongs to the PsbB/PsbC family. PsbB subfamily. As to quaternary structure, PSII is composed of 1 copy each of membrane proteins PsbA, PsbB, PsbC, PsbD, PsbE, PsbF, PsbH, PsbI, PsbJ, PsbK, PsbL, PsbM, PsbT, PsbX, PsbY, PsbZ, Psb30/Ycf12, at least 3 peripheral proteins of the oxygen-evolving complex and a large number of cofactors. It forms dimeric complexes. Binds multiple chlorophylls. PSII binds additional chlorophylls, carotenoids and specific lipids. is required as a cofactor.

The protein resides in the plastid. Its subcellular location is the chloroplast thylakoid membrane. One of the components of the core complex of photosystem II (PSII). It binds chlorophyll and helps catalyze the primary light-induced photochemical processes of PSII. PSII is a light-driven water:plastoquinone oxidoreductase, using light energy to abstract electrons from H(2)O, generating O(2) and a proton gradient subsequently used for ATP formation. This chain is Photosystem II CP47 reaction center protein, found in Psilotum nudum (Whisk fern).